The chain runs to 439 residues: Chitinase-like protein Idgf1 (439 aa).

A signal peptide spans 1–20 (MRFQLFYILGLLSVTSLTQA). Positions 22–439 (NNLVCYYDST…IVRSIKYFMG (418 aa)) constitute a GH18 domain. Cys26 and Cys53 are joined by a disulfide. N-linked (GlcNAc...) asparagine glycosylation is found at Asn122, Asn218, and Asn346. The cysteines at positions 340 and 423 are disulfide-linked.

The protein belongs to the glycosyl hydrolase 18 family. IDGF subfamily. Glycosylated.

It localises to the secreted. Cooperates with insulin-like peptides to stimulate the proliferation, polarization and motility of imaginal disk cells. May act by stabilizing the binding of insulin-like peptides to its receptor through a simultaneous interaction with both molecules to form a multiprotein signaling complex. The sequence is that of Chitinase-like protein Idgf1 (Idgf1) from Drosophila simulans (Fruit fly).